The following is a 396-amino-acid chain: Probable tRNA sulfurtransferase (396 aa).

The 104-residue stretch at 63 to 166 folds into the THUMP domain; it reads AAAARASARV…GRRAYFFDTI (104 aa). Residues 184-185, R266, G288, and Q297 each bind ATP; that span reads LY.

Belongs to the ThiI family.

Its subcellular location is the cytoplasm. The enzyme catalyses [ThiI sulfur-carrier protein]-S-sulfanyl-L-cysteine + a uridine in tRNA + 2 reduced [2Fe-2S]-[ferredoxin] + ATP + H(+) = [ThiI sulfur-carrier protein]-L-cysteine + a 4-thiouridine in tRNA + 2 oxidized [2Fe-2S]-[ferredoxin] + AMP + diphosphate. It carries out the reaction [ThiS sulfur-carrier protein]-C-terminal Gly-Gly-AMP + S-sulfanyl-L-cysteinyl-[cysteine desulfurase] + AH2 = [ThiS sulfur-carrier protein]-C-terminal-Gly-aminoethanethioate + L-cysteinyl-[cysteine desulfurase] + A + AMP + 2 H(+). It functions in the pathway cofactor biosynthesis; thiamine diphosphate biosynthesis. Catalyzes the ATP-dependent transfer of a sulfur to tRNA to produce 4-thiouridine in position 8 of tRNAs, which functions as a near-UV photosensor. Also catalyzes the transfer of sulfur to the sulfur carrier protein ThiS, forming ThiS-thiocarboxylate. This is a step in the synthesis of thiazole, in the thiamine biosynthesis pathway. The sulfur is donated as persulfide by IscS. The protein is Probable tRNA sulfurtransferase of Aeropyrum pernix (strain ATCC 700893 / DSM 11879 / JCM 9820 / NBRC 100138 / K1).